Reading from the N-terminus, the 191-residue chain is Apoptosis regulator BHRF1 (191 aa).

Residues 1–18 (MAYSTREILLALCIRDSR) are interaction with host VRK2. The N-linked (GlcNAc...) asparagine; by host glycan is linked to Asn22. Residues 89 to 109 (EIFHRGDPSLGRALAWMAWCM) carry the BH1 motif. Residues 89 to 142 (EIFHRGDPSLGRALAWMAWCMHACRTLCCNQSTPYYVVDLSVRGMLEASEGLDG) form an interaction with host VRK2 region. A glycan (N-linked (GlcNAc...) asparagine; by host) is linked at Asn118. The BH2 signature appears at 142-157 (GWIHQQGGWSTLIEDN). A helical membrane pass occupies residues 166-186 (WTLFLAGLTLSLLVICSYLFI).

Belongs to the Bcl-2 family. Interacts with isoform 1 of host VRK2; this interaction is involved in protecting cells from apoptosis. Interacts with host PRA1; this interaction seems to modulate BHRF1 anti-apoptotic activity. Interacts with host BCL2L11. Interacts with host BAD and BBC3. Interacts with BALF1; BALF1 acting as a negative regulator of the survival function of BHRF1. Interacts with host BECN1.

The protein localises to the host membrane. It localises to the host mitochondrion. Functionally, prevents premature death of the host cell during virus production, which would otherwise reduce the amount of progeny virus. Acts as a host B-cell leukemia/lymphoma 2 (Bcl-2) homolog, and interacts with pro-apoptotic proteins to prevent mitochondria permeabilization, release of cytochrome c and subsequent apoptosis of the host cell. In addition, plays a role in the inhibiton of host BECN1-mediated starvation-induced autophagy without affecting basal levels of autophagy. The sequence is that of Apoptosis regulator BHRF1 from Homo sapiens (Human).